Reading from the N-terminus, the 503-residue chain is Glutamate--tRNA ligase 1 (503 aa).

The short motif at proline 17 to asparagine 27 is the 'HIGH' region element. Residues lysine 261–arginine 265 carry the 'KMSKS' region motif. Residue lysine 264 coordinates ATP.

The protein belongs to the class-I aminoacyl-tRNA synthetase family. Glutamate--tRNA ligase type 1 subfamily. As to quaternary structure, monomer.

The protein localises to the cytoplasm. It carries out the reaction tRNA(Glu) + L-glutamate + ATP = L-glutamyl-tRNA(Glu) + AMP + diphosphate. Its function is as follows. Catalyzes the attachment of glutamate to tRNA(Glu) in a two-step reaction: glutamate is first activated by ATP to form Glu-AMP and then transferred to the acceptor end of tRNA(Glu). In Levilactobacillus brevis (strain ATCC 367 / BCRC 12310 / CIP 105137 / JCM 1170 / LMG 11437 / NCIMB 947 / NCTC 947) (Lactobacillus brevis), this protein is Glutamate--tRNA ligase 1.